Here is a 777-residue protein sequence, read N- to C-terminus: Dynamin-like protein ARC5 (777 aa).

Residues 45–343 (PFEAPAVLVV…LWKRYKESVP (299 aa)) enclose the Dynamin-type G domain. Residues 55–62 (GQQTDGKS) form a G1 motif region. GTP is bound at residue 55–62 (GQQTDGKS). A G2 motif region spans residues 81-83 (KTR). Residues 160 to 163 (DTPG) form a G3 motif region. Residues 160 to 164 (DTPGL) and 231 to 234 (TKLD) each bind GTP. The tract at residues 231–234 (TKLD) is G4 motif. A G5 motif region spans residues 265 to 268 (SPFF). 2 coiled-coil regions span residues 300–320 (EDIA…EKSR) and 728–765 (NLRQ…NSHE).

Belongs to the TRAFAC class dynamin-like GTPase superfamily. Dynamin/Fzo/YdjA family. In terms of assembly, forms a homodimer and heterodimers with DRP3A and DRP3B on peroxisomes. Also interacts with FIS1A (but not FIS1B) and PEX11 proteins (PEX11A, PEX11B, PEX11C, PEX11D and PEX11E) on peroxisomes. Interacts with PDV1 and PDV2. Post-translationally, stabilized at the plastid outer envelope membranes (OEMs) in the constriction site when in complex with GTP, but destabilized after conversion of GTP into GDP leading to turnover with a cytosolic pool.

The protein resides in the cytoplasm. Its subcellular location is the plastid. It localises to the chloroplast outer membrane. The protein localises to the peroxisome. It is found in the cytosol. The catalysed reaction is GTP + H2O = GDP + phosphate + H(+). With respect to regulation, GTPase activity is repressed by PDV2 thus increasing stability at the plastid outer envelope membranes (OEMs) periphery. Its function is as follows. Mechanochemical GTPase component of both plastid and peroxisome division machinery. Required for the last steps of plastid division specifically in mesophyll-cell, when the narrow isthmus breaks, facilitating the separation of the daughter plastids. Necessary for peroxisome activities. Seems to influence stromule (stroma-filled tubular extensions of the plastid envelope membrane) length and frequency. In Arabidopsis thaliana (Mouse-ear cress), this protein is Dynamin-like protein ARC5.